The sequence spans 189 residues: Thymidine kinase (189 aa).

ATP contacts are provided by residues 9-16 and 85-88; these read GTMNSGKT and DESQ. Glu-86 functions as the Proton acceptor in the catalytic mechanism. Positions 143, 146, 180, and 183 each coordinate Zn(2+).

Belongs to the thymidine kinase family. Homotetramer.

The protein localises to the cytoplasm. It catalyses the reaction thymidine + ATP = dTMP + ADP + H(+). The chain is Thymidine kinase from Streptococcus pyogenes serotype M3 (strain ATCC BAA-595 / MGAS315).